The sequence spans 506 residues: Probable alpha-L-arabinofuranosidase B (506 aa).

An N-terminal signal peptide occupies residues 1 to 26 (MLPQLSIERASVFALGLIATGSLVVA). Residues 27 to 343 (GPCDIYSAGG…ANIVAAKYAT (317 aa)) are catalytic. Disulfide bonds link cysteine 29/cysteine 39, cysteine 89/cysteine 94, and cysteine 184/cysteine 185. Residue aspartate 227 coordinates substrate. The Nucleophile role is filled by glutamate 229. Substrate is bound at residue asparagine 230. Residue asparagine 240 is glycosylated (N-linked (GlcNAc...) asparagine). Glycine 304 contributes to the substrate binding site. Aspartate 305 serves as the catalytic Proton donor. The interval 344 to 506 (ASLTSGPKLT…VSWVISTGFA (163 aa)) is ABD. Cysteine 409 and cysteine 447 are oxidised to a cystine. Histidine 424, asparagine 426, phenylalanine 427, aspartate 443, histidine 471, leucine 476, and aspartate 496 together coordinate substrate.

This sequence belongs to the glycosyl hydrolase 54 family.

Its subcellular location is the secreted. It catalyses the reaction Hydrolysis of terminal non-reducing alpha-L-arabinofuranoside residues in alpha-L-arabinosides.. The protein operates within glycan metabolism; L-arabinan degradation. Functionally, alpha-L-arabinofuranosidase involved in the degradation of arabinoxylan, a major component of plant hemicellulose. Able to hydrolyze 1,5-, 1,3- and 1,2-alpha-linkages not only in L-arabinofuranosyl oligosaccharides, but also in polysaccharides containing terminal non-reducing L-arabinofuranoses in side chains, like L-arabinan, arabinogalactan and arabinoxylan. The chain is Probable alpha-L-arabinofuranosidase B (abfB) from Aspergillus fumigatus (strain ATCC MYA-4609 / CBS 101355 / FGSC A1100 / Af293) (Neosartorya fumigata).